Here is a 299-residue protein sequence, read N- to C-terminus: Acetylglutamate kinase (299 aa).

Substrate-binding positions include 72 to 73 (GG), R94, and N196.

It belongs to the acetylglutamate kinase family. ArgB subfamily.

The protein resides in the cytoplasm. The catalysed reaction is N-acetyl-L-glutamate + ATP = N-acetyl-L-glutamyl 5-phosphate + ADP. Its pathway is amino-acid biosynthesis; L-arginine biosynthesis; N(2)-acetyl-L-ornithine from L-glutamate: step 2/4. Functionally, catalyzes the ATP-dependent phosphorylation of N-acetyl-L-glutamate. In Burkholderia ambifaria (strain MC40-6), this protein is Acetylglutamate kinase.